The sequence spans 398 residues: AT-rich interactive domain-containing protein 6 (398 aa).

Residues 25-87 (EPLEPENDHN…PKTEGENAKK (63 aa)) form a disordered region. Positions 106–197 (PVEQVAFLRE…ALLEYEKCLR (92 aa)) constitute an ARID domain. Residues 213–236 (SSVEKEPSSHQGSGSGRARRDSAA) are disordered. The sHSP domain occupies 305–398 (VGPVADWVKI…RLFIRVPFEQ (94 aa)).

Belongs to the small heat shock protein (HSP20) family.

The protein localises to the nucleus. This chain is AT-rich interactive domain-containing protein 6 (ARID6), found in Arabidopsis thaliana (Mouse-ear cress).